Here is a 258-residue protein sequence, read N- to C-terminus: Pro-thyrotropin-releasing hormone-A (258 aa).

A signal peptide spans 1 to 22; sequence MKSACLIILASLVVCNLTLARG. Glutamine 78 carries the pyrrolidone carboxylic acid modification. Proline amide is present on proline 80. Composition is skewed to basic and acidic residues over residues 84-98 and 107-119; these read YQEE…GKRE and EVQK…KRED. A disordered region spans residues 84-124; that stretch reads YQEELEKRQHPGKREEDEDEDYDEVQKRQHPGKREDEFDSF. Glutamine 92 bears the Pyrrolidone carboxylic acid mark. Proline 94 bears the Proline amide mark. Pyrrolidone carboxylic acid is present on glutamine 112. Proline 114 carries the proline amide modification. Glutamine 131 bears the Pyrrolidone carboxylic acid mark. A Proline amide modification is found at proline 133. The residue at position 156 (glutamine 156) is a Pyrrolidone carboxylic acid. Proline 158 is modified (proline amide). Disordered regions lie at residues 166-215 and 236-258; these read YSKR…PCDV and SRAE…TEQE. Glutamine 170 carries the pyrrolidone carboxylic acid modification. The residue at position 172 (proline 172) is a Proline amide. The span at 184–193 shows a compositional bias: basic and acidic residues; that stretch reads GDLRELEKRQ. Glutamine 193 bears the Pyrrolidone carboxylic acid mark. Proline amide is present on proline 195. Glutamine 242 carries the post-translational modification Pyrrolidone carboxylic acid. Position 244 is a proline amide (proline 244).

The protein belongs to the TRH family.

The protein localises to the secreted. Functionally, functions as a regulator of the biosynthesis of TSH in the anterior pituitary gland and as a neurotransmitter/ neuromodulator in the central and peripheral nervous systems. The chain is Pro-thyrotropin-releasing hormone-A (trha) from Oncorhynchus nerka (Sockeye salmon).